The sequence spans 200 residues: ATP-dependent Clp protease proteolytic subunit (200 aa).

The Nucleophile role is filled by S96. H121 is an active-site residue.

The protein belongs to the peptidase S14 family. Fourteen ClpP subunits assemble into 2 heptameric rings which stack back to back to give a disk-like structure with a central cavity, resembling the structure of eukaryotic proteasomes.

The protein resides in the cytoplasm. The enzyme catalyses Hydrolysis of proteins to small peptides in the presence of ATP and magnesium. alpha-casein is the usual test substrate. In the absence of ATP, only oligopeptides shorter than five residues are hydrolyzed (such as succinyl-Leu-Tyr-|-NHMec, and Leu-Tyr-Leu-|-Tyr-Trp, in which cleavage of the -Tyr-|-Leu- and -Tyr-|-Trp bonds also occurs).. Cleaves peptides in various proteins in a process that requires ATP hydrolysis. Has a chymotrypsin-like activity. Plays a major role in the degradation of misfolded proteins. The protein is ATP-dependent Clp protease proteolytic subunit of Leuconostoc citreum (strain KM20).